Here is a 1291-residue protein sequence, read N- to C-terminus: MAAETQTLNFGPEWLRALSSGGSITSPPLSPALPKYKLADYRYGREEMLALFLKDYKIPFDLLEKEFLPILQEEPLPPLALVPFTEEEQRNFSMSVNSAAVLRLTGRGGGGGTVVGAPRGRSSSRGRGRGRGECGFYQRSFDEVEGVFGRGGGREMHRSQSWEERGDRRFEKPGRKDVGRPNFEESGPTSVGRKHEFIRSESENWRIFREEQNGEDEDGGWRLAGSRRDGERWRPHSPDGPRSTGWREHMERRRRFEFDFRDRDDERGYRRVRSGSGSIDDDRDSLPEWCLEDAEEEMGTFDSSGAFLSLKKVQKEPIPEEQEMDFRPVEEGEERSDSDSSHNEEAKEPDKTNRREGEKTDRAGAEASEEVPQTSLSSARPGTPSDHQPQEATQFERKDEPKAEQVEKAEEENRSENSLSAKVPSRGDETVPASQQPSTPLPPDTASPLLILSPPVPTPSSASRPVETAAVEAPGMSSVSTEPDDEEGLKHLEQQAEKMVAYLQDSALDDERLTSKLQEHRAKGVSIPLMHEAMQKWYYKDPQGEIQGPFNNQEMAEWFQAGYFTMSLLVKRACDESFQPLGDIMKMWGRVPFSPGPAPPPHMGELDQERLTRQQELTALYQMQHLQYQQFLIQQQYAQVLAQQQKAALSSQQQQQLALLLQQFQALKMRMSDQNIIPSVTRSVSVPDTGSIWELQPAASQPAVWEGGSVWDLPLDTTAPGPSLEQLQQLEKAKAAKLEQERREAEMRAKREEEERKRQEELRRQQEEILRRQQEEERKRREEEELARRKQEEALRRQREQEIALRRQREEEERQQQEEALRRLEERRREEEERRKQEELLRKQEEEAAKWAREEEEAQRRLEENRLRMEEEAARLRHEEEERKRKELELQRQKDLMRQRQQQQEALRRLQQQQQQQQLAQMKLPSSSTWGQQSNTATCQSQATLSLAEIQKLEEERERQLREEQRRQQRELMKALQQQQQQQQQQKLSGWGNVSKPAGTTKSLLEIQQEEARQMQKQQQQQQQQQQQHQQSNRARNSTHSNLHTSLGNSVWGSINTGPSNQWASELVSSIWSNADTKNSNMGFWDDAVKEVGPRNSTNKNKNNASLSKSVGVSNRQNKKVEEEEKLLKLFQGVNKAQDGFTQWCEQMLHALNTANNLDVPTFVSFLKEVESPYEVHDYTRAYLGDTSEAKEFAKQFLERRAKQKVNQQRQQQQQQQQQQDSVWGMNHSTLHSVFQTNQSNNQQSNFEAVQSGKKKKKQKMVRADPSLLGFSVNASSERLNMGEIETLDDY.

The residue at position 2 (Ala2) is an N-acetylalanine. Residues Ser19, Ser26, and Ser30 each carry the phosphoserine modification. Omega-N-methylarginine is present on residues Arg107, Arg119, and Arg121. The interval 112–132 (GTVVGAPRGRSSSRGRGRGRG) is disordered. Ser140 bears the Phosphoserine mark. Disordered stretches follow at residues 148 to 196 (FGRG…RKHE), 209 to 248 (REEQ…GWRE), and 267 to 484 (RGYR…TEPD). Arg150 bears the Omega-N-methylarginine mark. Residues 152–183 (GGREMHRSQSWEERGDRRFEKPGRKDVGRPNF) are compositionally biased toward basic and acidic residues. Ser161, Ser190, and Ser237 each carry phosphoserine. Basic and acidic residues predominate over residues 226-248 (SRRDGERWRPHSPDGPRSTGWRE). Positions 281–311 (DDRDSLPEWCLEDAEEEMGTFDSSGAFLSLK) match the DDX6 binding motif motif. Positions 290–299 (CLEDAEEEMG) are enriched in acidic residues. Residues 313 to 364 (VQKEPIPEEQEMDFRPVEEGEERSDSDSSHNEEAKEPDKTNRREGEKTDRAG) show a composition bias toward basic and acidic residues. The span at 371 to 393 (VPQTSLSSARPGTPSDHQPQEAT) shows a compositional bias: polar residues. Position 383 is a phosphothreonine (Thr383). The segment covering 394–415 (QFERKDEPKAEQVEKAEEENRS) has biased composition (basic and acidic residues). The region spanning 534-582 (MQKWYYKDPQGEIQGPFNNQEMAEWFQAGYFTMSLLVKRACDESFQPLG) is the GYF domain. A required for GRB10-binding region spans residues 548 to 564 (GPFNNQEMAEWFQAGYF). Ser594 bears the Phosphoserine mark. Disordered stretches follow at residues 732–794 (KAKA…QEEA), 846–937 (EEAA…SNTA), 958–998 (ERQL…SKPA), 1011–1053 (EARQ…SVWG), and 1090–1118 (KEVG…NRQN). The span at 846 to 898 (EEAAKWAREEEEAQRRLEENRLRMEEEAARLRHEEEERKRKELELQRQKDLMR) shows a compositional bias: basic and acidic residues. Over residues 899-924 (QRQQQQEALRRLQQQQQQQQLAQMKL) the composition is skewed to low complexity. The segment covering 925–937 (PSSSTWGQQSNTA) has biased composition (polar residues). A compositionally biased stretch (basic and acidic residues) spans 958–973 (ERQLREEQRRQQRELM). A compositionally biased stretch (low complexity) spans 977–986 (QQQQQQQQQQ). Position 995 is a phosphoserine (Ser995). Over residues 1015–1031 (MQKQQQQQQQQQQQHQQ) the composition is skewed to low complexity. Positions 1032-1053 (SNRARNSTHSNLHTSLGNSVWG) are enriched in polar residues. Residues 1096 to 1110 (NSTNKNKNNASLSKS) show a composition bias toward low complexity. Lys1129 is covalently cross-linked (Glycyl lysine isopeptide (Lys-Gly) (interchain with G-Cter in SUMO2)). Disordered stretches follow at residues 1202 to 1223 (AKQK…QDSV) and 1239 to 1263 (QSNN…KMVR). A compositionally biased stretch (low complexity) spans 1208 to 1220 (QQRQQQQQQQQQQ). At Ser1276 the chain carries Phosphoserine.

The protein belongs to the GIGYF family. In terms of assembly, component of the 4EHP-GYF2 complex, at least composed of EIF4E2, GIGYF2 and ZNF598. Interacts (via the 4EHP-binding motif) with EIF4E2; the interaction is direct. Interacts with ZFP36/TTP (via P-P-P-P-G repeats); the interaction is direct. Interacts with GRB10. Interacts (via DDX6 motif) with DDX6 (via RecA-like domain 2). In terms of tissue distribution, expressed in heart, liver, kidney and brain as well as in testis.

Key component of the 4EHP-GYF2 complex, a multiprotein complex that acts as a repressor of translation initiation. In the 4EHP-GYF2 complex, acts as a factor that bridges EIF4E2 to ZFP36/TTP, linking translation repression with mRNA decay. Also recruits and bridges the association of the 4EHP complex with the decapping effector protein DDX6, which is required for the ZFP36/TTP-mediated down-regulation of AU-rich mRNA. May act cooperatively with GRB10 to regulate tyrosine kinase receptor signaling, including IGF1 and insulin receptors. In association with EIF4E2, assists ribosome-associated quality control (RQC) by sequestering the mRNA cap, blocking ribosome initiation and decreasing the translational load on problematic messages. Part of a pathway that works in parallel to RQC-mediated degradation of the stalled nascent polypeptide. GIGYF2 and EIF4E2 work downstream and independently of ZNF598, which seems to work as a scaffold that can recruit them to faulty mRNA even if alternative recruitment mechanisms may exist. The chain is GRB10-interacting GYF protein 2 from Mus musculus (Mouse).